The following is a 102-amino-acid chain: ATP-dependent Clp protease adapter protein ClpS (102 aa).

Belongs to the ClpS family. Binds to the N-terminal domain of the chaperone ClpA.

Its function is as follows. Involved in the modulation of the specificity of the ClpAP-mediated ATP-dependent protein degradation. The protein is ATP-dependent Clp protease adapter protein ClpS of Shewanella oneidensis (strain ATCC 700550 / JCM 31522 / CIP 106686 / LMG 19005 / NCIMB 14063 / MR-1).